The following is a 273-amino-acid chain: Large ribosomal subunit protein uL2c (273 aa).

The protein belongs to the universal ribosomal protein uL2 family. As to quaternary structure, part of the 50S ribosomal subunit.

Its subcellular location is the plastid. It is found in the apicoplast. The sequence is that of Large ribosomal subunit protein uL2c (rpl2) from Eimeria tenella (Coccidian parasite).